Here is a 270-residue protein sequence, read N- to C-terminus: 5-amino-6-(5-phospho-D-ribitylamino)uracil phosphatase YitU (270 aa).

Asp-11 serves as the catalytic Nucleophile. Position 11 (Asp-11) interacts with Mg(2+). Leu-12 lines the phosphate pocket. Residue Asp-13 participates in Mg(2+) binding. Residues 45–46 and Lys-197 each bind phosphate; that span reads TG. Position 220 (Asp-220) interacts with Mg(2+). A phosphate-binding site is contributed by Asn-223.

This sequence belongs to the HAD-like hydrolase superfamily. Cof family. The cofactor is Mg(2+).

The catalysed reaction is 5-amino-6-(5-phospho-D-ribitylamino)uracil + H2O = 5-amino-6-(D-ribitylamino)uracil + phosphate. It participates in cofactor biosynthesis; riboflavin biosynthesis; 5-amino-6-(D-ribitylamino)uracil from GTP: step 4/4. In terms of biological role, catalyzes the dephosphorylation of the riboflavin precursor 5-amino-6-(5-phospho-D-ribitylamino)uracil and of flavin mononucleotide (FMN) in vitro. The sequence is that of 5-amino-6-(5-phospho-D-ribitylamino)uracil phosphatase YitU (yitU) from Bacillus subtilis (strain 168).